The primary structure comprises 426 residues: Putative acid phosphatase 1 (426 aa).

The first 18 residues, 1-18, serve as a signal peptide directing secretion; sequence MRVLFYVSILVIIASVHT. At 19–388 the chain is on the extracellular side; the sequence is QLISVHVIFR…SEWVMTPLSW (370 aa). The active-site Nucleophile is the H29. N-linked (GlcNAc...) asparagine glycosylation is found at N37 and N145. Cysteines 133 and 369 form a disulfide. The active-site Proton donor is the D276. The chain crosses the membrane as a helical span at residues 389–409; sequence IIVAIAILLLIALILMTYFVI. Over 410–426 the chain is Cytoplasmic; it reads RYKNRSIVNIKKLSLEN.

It belongs to the histidine acid phosphatase family.

The protein resides in the membrane. It catalyses the reaction a phosphate monoester + H2O = an alcohol + phosphate. This Caenorhabditis elegans protein is Putative acid phosphatase 1.